We begin with the raw amino-acid sequence, 330 residues long: Phenylalanine--tRNA ligase alpha subunit (330 aa).

Glutamate 255 serves as a coordination point for Mg(2+).

Belongs to the class-II aminoacyl-tRNA synthetase family. Phe-tRNA synthetase alpha subunit type 1 subfamily. As to quaternary structure, tetramer of two alpha and two beta subunits. Mg(2+) is required as a cofactor.

Its subcellular location is the cytoplasm. It carries out the reaction tRNA(Phe) + L-phenylalanine + ATP = L-phenylalanyl-tRNA(Phe) + AMP + diphosphate + H(+). This chain is Phenylalanine--tRNA ligase alpha subunit, found in Acinetobacter baumannii (strain SDF).